We begin with the raw amino-acid sequence, 164 residues long: 3-isopropylmalate dehydratase small subunit 1 (164 aa).

It belongs to the LeuD family. LeuD type 2 subfamily. As to quaternary structure, heterodimer of LeuC and LeuD.

It catalyses the reaction (2R,3S)-3-isopropylmalate = (2S)-2-isopropylmalate. Its pathway is amino-acid biosynthesis; L-leucine biosynthesis; L-leucine from 3-methyl-2-oxobutanoate: step 2/4. Its function is as follows. Catalyzes the isomerization between 2-isopropylmalate and 3-isopropylmalate, via the formation of 2-isopropylmaleate. This Pyrococcus abyssi (strain GE5 / Orsay) protein is 3-isopropylmalate dehydratase small subunit 1 (leuD1).